Here is an 85-residue protein sequence, read N- to C-terminus: Polcalcin Bet v 4 (85 aa).

EF-hand domains lie at 7–42 (QDKA…LGSI) and 42–77 (ITPD…NRGL). Asp-20, Asn-22, Asp-24, Lys-26, Glu-31, Asp-55, Asp-57, Asp-59, and Glu-66 together coordinate Ca(2+).

Monomer.

The polypeptide is Polcalcin Bet v 4 (BETV4) (Betula pendula (European white birch)).